Here is a 124-residue protein sequence, read N- to C-terminus: Small ribosomal subunit protein uS12 (124 aa).

D89 bears the 3-methylthioaspartic acid mark.

Belongs to the universal ribosomal protein uS12 family. In terms of assembly, part of the 30S ribosomal subunit. Contacts proteins S8 and S17. May interact with IF1 in the 30S initiation complex.

Functionally, with S4 and S5 plays an important role in translational accuracy. Its function is as follows. Interacts with and stabilizes bases of the 16S rRNA that are involved in tRNA selection in the A site and with the mRNA backbone. Located at the interface of the 30S and 50S subunits, it traverses the body of the 30S subunit contacting proteins on the other side and probably holding the rRNA structure together. The combined cluster of proteins S8, S12 and S17 appears to hold together the shoulder and platform of the 30S subunit. The polypeptide is Small ribosomal subunit protein uS12 (Arthrobacter sp. (strain FB24)).